Consider the following 265-residue polypeptide: Glutamate racemase (265 aa).

Substrate contacts are provided by residues 7-8 and 39-40; these read DS and YG. The active-site Proton donor/acceptor is Cys71. 72-73 provides a ligand contact to substrate; it reads NT. Residue Cys184 is the Proton donor/acceptor of the active site. 185–186 serves as a coordination point for substrate; the sequence is TH.

Belongs to the aspartate/glutamate racemases family.

It carries out the reaction L-glutamate = D-glutamate. Its pathway is cell wall biogenesis; peptidoglycan biosynthesis. In terms of biological role, provides the (R)-glutamate required for cell wall biosynthesis. In Sulfurovum sp. (strain NBC37-1), this protein is Glutamate racemase.